Reading from the N-terminus, the 203-residue chain is Fucoxanthin-chlorophyll a-c binding protein, chloroplastic (203 aa).

The N-terminal 30 residues, 1–30 (MKLAIAALLAGSAAAFAPAQSGKASTALNM), are a transit peptide targeting the chloroplast.

Belongs to the fucoxanthin chlorophyll protein family. The LHC complex of chromophytic algae is composed of fucoxanthin, chlorophyll A and C bound non-covalently by fucoxanthin chlorophyll proteins (FCPs). The ratio of pigments in this LHC is; fucoxanthin: chlorophyll C: chlorophyll A; (0.6-1): (0.1-0.3): (1).

It is found in the plastid. The protein resides in the chloroplast thylakoid membrane. The light-harvesting complex (LHC) functions as a light receptor, it captures and delivers excitation energy to photosystems with which it is closely associated. Energy is transferred from the carotenoid and chlorophyll C (or B) to chlorophyll A and the photosynthetic reaction centers where it is used to synthesize ATP and reducing power. This is Fucoxanthin-chlorophyll a-c binding protein, chloroplastic (FCPA) from Trieres chinensis (Marine centric diatom).